Reading from the N-terminus, the 414-residue chain is MFPGAVIRKLAFSEEIYARYQAFTSFTAHVRGPVDIDAMSEAFDALLQAHPVFAAHLEEGPDGNHHIVANDLLHSGLVVIDGRRAENPHVQLDQRDSLFRLQLTLGESENLVTAYVHHSLADAHHLGSLLDELLSRYTDVVTTGDPGPITPEPAPQPAEDLLKRRGIKQSALTGFERFLPLLFAYDLPPIAEEMRKFEAPEPVPVTRCRLTSQETADLVSFSRDNGLSFNAVLAAAILLAEWRLRETPHVPIPYCYAVDLRFLLSPPVGATESTNPVGLATYLAEIGPDTDITELAADIVATFRADLSDGMIHQSALRSGRILEGTPPGLPPFILCTNVSTLPPIRTPEDVELVDFHSRIHCAMDVPFGFYACSIATDRLSIELHGSIPAPQLLLDAIRDILCSVPSEYGLFME.

The active-site Proton acceptor is the histidine 118.

The protein belongs to the acyltransferase PapA5 family. Monomer. Interacts directly with the acyl carrier protein (ACP) domain of the mycocerosic acid synthase (mas) protein.

The enzyme catalyses 2 a mycocerosyl-[mycocerosic acid synthase] + a phthiocerol = a dimycocerosyl phthiocerol + 2 holo-[mycocerosic acid synthase].. The catalysed reaction is 2 a mycocerosyl-[mycocerosic acid synthase] + a phthiodiolone = a dimycocerosyl phthiodiolone + 2 holo-[mycocerosic acid synthase].. It carries out the reaction 2 a mycocerosyl-[mycocerosic acid synthase] + a phenolphthiocerol = a dimycocerosyl phenolphthiocerol + 2 holo-[mycocerosic acid synthase].. In terms of biological role, catalyzes diesterification of phthiocerol, phthiodiolone, and phenolphthiocerol with mycocerosic acids, the final step in the phthiocerol, phthiodiolone and phenolphthiocerol dimycocerosate esters (PDIM) synthesis. Can directly transfer the mycocerosate bound to the mycocerosic acid synthase (mas) onto the substrate alcohols. The chain is Phthiocerol/phthiodiolone dimycocerosyl transferase (papA5) from Mycobacterium ulcerans (strain Agy99).